A 213-amino-acid polypeptide reads, in one-letter code: Triosephosphate isomerase (213 aa).

Substrate is bound at residue 7-9 (NLK). The active-site Electrophile is His-88. The Proton acceptor role is filled by Glu-136. Positions 141 and 174 each coordinate substrate.

It belongs to the triosephosphate isomerase family. Homotetramer; dimer of dimers.

The protein resides in the cytoplasm. The enzyme catalyses D-glyceraldehyde 3-phosphate = dihydroxyacetone phosphate. Its pathway is carbohydrate biosynthesis; gluconeogenesis. It participates in carbohydrate degradation; glycolysis; D-glyceraldehyde 3-phosphate from glycerone phosphate: step 1/1. Functionally, involved in the gluconeogenesis. Catalyzes stereospecifically the conversion of dihydroxyacetone phosphate (DHAP) to D-glyceraldehyde-3-phosphate (G3P). This is Triosephosphate isomerase from Thermoplasma volcanium (strain ATCC 51530 / DSM 4299 / JCM 9571 / NBRC 15438 / GSS1).